The primary structure comprises 435 residues: Metacaspase-1A (435 aa).

2 disordered regions span residues 1 to 46 and 106 to 129; these read MQNH…APPP and YQNP…VAFG. Over residues 36–46 the composition is skewed to pro residues; sequence SPQPGYGAPPP. Residues H231 and C287 contribute to the active site.

This sequence belongs to the peptidase C14B family.

In terms of biological role, involved in cell death (apoptosis). This is Metacaspase-1A (casA) from Neosartorya fischeri (strain ATCC 1020 / DSM 3700 / CBS 544.65 / FGSC A1164 / JCM 1740 / NRRL 181 / WB 181) (Aspergillus fischerianus).